We begin with the raw amino-acid sequence, 100 residues long: Integration host factor subunit alpha (100 aa).

The protein belongs to the bacterial histone-like protein family. In terms of assembly, heterodimer of an alpha and a beta chain.

In terms of biological role, this protein is one of the two subunits of integration host factor, a specific DNA-binding protein that functions in genetic recombination as well as in transcriptional and translational control. The polypeptide is Integration host factor subunit alpha (Caulobacter vibrioides (strain ATCC 19089 / CIP 103742 / CB 15) (Caulobacter crescentus)).